We begin with the raw amino-acid sequence, 125 residues long: RxLR effector protein Avh6 (125 aa).

The first 25 residues, 1-25 (MRLSSTTFVVLAAVLLASGTAVSKA), serve as a signal peptide directing secretion. A RxLR-dEER motif is present at residues 48-70 (RFLRSHHTEDGEAKLSNYDNEER).

It belongs to the RxLR effector family.

The protein localises to the secreted. The protein resides in the host cell. In terms of biological role, effector that suppresses plant defense responses during the early stages of pathogen infection. Suppresses cell death induced by effectors and PAMPs in plant hosts. Triggers a hypersensitive response (HR) in the presence of Rps1d. Suppresses BAX-induced cell death and enhan,ced P.capsici infection in Nicotiana benthamiana. Also suppresses effector-triggered immunity induction by associating with Avr1b and Rps1b, suggesting a role in suppressing plant immunity. The polypeptide is RxLR effector protein Avh6 (Phytophthora sojae (strain P6497) (Soybean stem and root rot agent)).